The chain runs to 90 residues: Small ribosomal subunit protein uS15 (90 aa).

Belongs to the universal ribosomal protein uS15 family. In terms of assembly, part of the 30S ribosomal subunit. Forms a bridge to the 50S subunit in the 70S ribosome, contacting the 23S rRNA.

Its function is as follows. One of the primary rRNA binding proteins, it binds directly to 16S rRNA where it helps nucleate assembly of the platform of the 30S subunit by binding and bridging several RNA helices of the 16S rRNA. Forms an intersubunit bridge (bridge B4) with the 23S rRNA of the 50S subunit in the ribosome. The sequence is that of Small ribosomal subunit protein uS15 from Aliarcobacter butzleri (strain RM4018) (Arcobacter butzleri).